Reading from the N-terminus, the 114-residue chain is NADH dehydrogenase [ubiquinone] 1 subunit C2, isoform 2 (114 aa).

Residues 56–75 (GLHRQLLYITAFFFAGYYLV) traverse the membrane as a helical segment.

It belongs to the complex I NDUFC2 subunit family. In terms of assembly, complex I is composed of 45 different subunits.

It localises to the mitochondrion inner membrane. In terms of biological role, accessory subunit of the mitochondrial membrane respiratory chain NADH dehydrogenase (Complex I), that is believed not to be involved in catalysis. Complex I functions in the transfer of electrons from NADH to the respiratory chain. The immediate electron acceptor for the enzyme is believed to be ubiquinone. In Homo sapiens (Human), this protein is NADH dehydrogenase [ubiquinone] 1 subunit C2, isoform 2 (NDUFC2-KCTD14).